The following is a 183-amino-acid chain: MESSLTFLLLPVGFPGEVLVTLARRAREAMPVPSLWLASTDPLEPPIEAYSWERMQFDAEKVNEHIHSVLYDYVREGIRIIGVVDADGYIPGFNFVFGLASTALGVATVYTRRLKTGGNGLYTERLLKEVLHEAGHLLGLDHCSNRECVMSFSRSVEEVDRKAPLFCSSCKAKLVLKYGSRGQ.

Position 132 (H132) interacts with Zn(2+). E133 serves as the catalytic Proton acceptor. 6 residues coordinate Zn(2+): H136, H142, C143, C148, C167, and C170.

Belongs to the peptidase M54 family. As to quaternary structure, monomer. Zn(2+) serves as cofactor.

Probable zinc metalloprotease whose natural substrate is unknown. This chain is Archaemetzincin, found in Aeropyrum pernix (strain ATCC 700893 / DSM 11879 / JCM 9820 / NBRC 100138 / K1).